Consider the following 591-residue polypeptide: DDB1- and CUL4-associated factor 8 (591 aa).

The segment covering 1 to 14 (MSSKRPSTDGRRDL) has biased composition (basic and acidic residues). The segment at 1 to 140 (MSSKRPSTDG…EDWVSSETTA (140 aa)) is disordered. Residues S21 and S22 each carry the phosphoserine modification. The Nuclear export signal motif lies at 39-50 (IEVEASDLSLSL). 2 stretches are compositionally biased toward basic and acidic residues: residues 65-99 (RGTDTESSGEEKDSDSMEDTGHYSINDENRVHGHS) and 118-131 (SRDQDSSDDERALE). Phosphoserine is present on residues S99, S123, and S124. 7 WD repeats span residues 185–224 (GHTGCVNTLHFNQRGTWLASGSDDLKVVVWDWVRRQPVLD), 228–269 (GHKS…CCKN), 275–315 (QHKG…PASK), 323–363 (EKKV…ENEN), 379–418 (ESKANITCLVYSHDGTELLASYNDEDIYLFNSSHSDGAQY), 426–466 (RNNA…IIQF), and 470–509 (DKGGVVNCLEPHPHLPVLATSGLDHDVKIWAPTAEASTEL). R198 bears the Omega-N-methylarginine; by PRMT1 mark. The tract at residues 552 to 591 (HRRWREPGVGATDADSDESPSSSDTSDEEEGPDRVQCMPS) is disordered.

Belongs to the WD repeat DCAF8 family. In terms of assembly, interacts with DDB1, CUL4A and CUL4B. Interacts with KPNA1, KPNB1 and XPO1.

It is found in the nucleus. Its subcellular location is the cytoplasm. Its pathway is protein modification; protein ubiquitination. May function as a substrate receptor for CUL4-DDB1 E3 ubiquitin-protein ligase complex. The protein is DDB1- and CUL4-associated factor 8 (Dcaf8) of Rattus norvegicus (Rat).